A 233-amino-acid polypeptide reads, in one-letter code: Protein Mis18-alpha (233 aa).

A phosphoserine mark is found at S36, S39, and S40. Residues 80–178 form the Mis18 domain; the sequence is PLVFLCSGCR…SVEAIESYVL (99 aa). Zn(2+)-binding residues include C85, C88, C141, and C144. A Glycyl lysine isopeptide (Lys-Gly) (interchain with G-Cter in SUMO2) cross-link involves residue K162. Phosphoserine is present on S233.

The protein belongs to the mis18 family. As to quaternary structure, homodimer, and heterodimer with OIP5/MIS18B. Identified in a complex containing MIS18A, OIP5/MIS18B, MIS18BP1, RBBP7 and RBBP4. In terms of tissue distribution, detected in testis.

The protein resides in the nucleus. It localises to the chromosome. It is found in the centromere. Its function is as follows. Required for recruitment of CENPA to centromeres and normal chromosome segregation during mitosis. The chain is Protein Mis18-alpha (MIS18A) from Homo sapiens (Human).